The following is a 316-amino-acid chain: uncharacterized protein (316 aa).

The S4 RNA-binding domain maps to 16-89; sequence ERLDKFLARA…IPINIIYEDE (74 aa). The active site involves Asp140.

This sequence belongs to the pseudouridine synthase RluA family.

The catalysed reaction is a uridine in RNA = a pseudouridine in RNA. This is an uncharacterized protein from Aquifex aeolicus (strain VF5).